Consider the following 561-residue polypeptide: Sesquiterpene synthase TPS2 (561 aa).

Residues 6-26 (ANGHSDVPSTQPPIGKQKKEI) form a disordered region. The (2E,6E)-farnesyl diphosphate site is built by R277, D314, D318, R455, and D458. Residues D314 and D318 each coordinate Mg(2+). Residues 314 to 318 (DDTYD) carry the DDXXD motif motif. D458, S462, and E466 together coordinate Mg(2+).

It belongs to the terpene synthase family. Tpsa subfamily. Monomer. The cofactor is Mg(2+).

It is found in the cytoplasm. It carries out the reaction (2E,6E)-farnesyl diphosphate = beta-ylangene + diphosphate. The catalysed reaction is (2E,6E)-farnesyl diphosphate = beta-copaene + diphosphate. It catalyses the reaction (2E,6E)-farnesyl diphosphate = beta-cubebene + diphosphate. The protein operates within secondary metabolite biosynthesis; terpenoid biosynthesis. Its function is as follows. Sesquiterpene synthase involved in the biosynthesis of volatile organic compounds. Mediates the conversion of (2E,6E)-farnesyl diphosphate (FPP) into beta-ylangene, beta-copaene and beta-cubebene. Does not use (2E)-geranyl diphosphate (GPP) as substrate. In Cananga odorata (Ylang-ylang tree), this protein is Sesquiterpene synthase TPS2.